The chain runs to 271 residues: MEDSHKSTTSETAPQPGSAVQGAHISHIAQQVSSLSESEESQDSSDSIGSSQKAHGILARRPSYRKILKDLSSEDTRGRKGDGENSGVSAAVTSMSVPTPIYQTSSGQYIAIAPNGALQLASPGTDGVQGLQTLTMTNSGSTQQGTTILQYAQTSDGQQILVPSNQVVVQTASGDMQTYQIRTTPSATSLPQTVVMTSPVTLTSQTTKTDDPQLKREIRLMKNREAARECRRKKKEYVKCLENRVAVLENQNKTLIEELKTLKDLYSNKSV.

Positions 1–61 (MEDSHKSTTS…QKAHGILARR (61 aa)) are disordered. One can recognise a KID domain in the interval 31–90 (QVSSLSESEESQDSSDSIGSSQKAHGILARRPSYRKILKDLSSEDTRGRKGDGENSGVSA). Residue S63 is modified to Phosphoserine; by CaMK1, CDK3, RPS6KA4 and RPS6KA5. S198 is subject to Phosphoserine; by HIPK2. Residues K208 and K215 each participate in a glycyl lysine isopeptide (Lys-Gly) (interchain with G-Cter in SUMO2) cross-link. The 59-residue stretch at 213–271 (QLKREIRLMKNREAARECRRKKKEYVKCLENRVAVLENQNKTLIEELKTLKDLYSNKSV) folds into the bZIP domain. Positions 215–239 (KREIRLMKNREAARECRRKKKEYVK) are basic motif. Positions 241 to 262 (LENRVAVLENQNKTLIEELKTL) are leucine-zipper.

The protein belongs to the bZIP family. ATF subfamily. In terms of assembly, binds DNA as a dimer. Interacts with HIPK2 and CDK3. Interacts with MOTS-c, a peptide produced by the mitochondrially encoded 12S rRNA MT-RNR1; the interaction occurs in the nucleus following metabolic stress. In terms of processing, phosphorylated at Ser-198 by HIPK2 in response to genotoxic stress. This phosphorylation promotes transcription repression of FTH1 and other antioxidant detoxification genes. The CDK3-mediated phosphorylation at Ser-63 promotes its transactivation and transcriptional activities. Phosphorylated at Ser-63 by RPS6KA4 and RPS6KA5 in response to mitogenic or stress stimuli.

Its subcellular location is the nucleus. In terms of biological role, this protein binds the cAMP response element (CRE) (consensus: 5'-GTGACGT[AC][AG]-3'), a sequence present in many viral and cellular promoters. Binds to the Tax-responsive element (TRE) of HTLV-I. Mediates PKA-induced stimulation of CRE-reporter genes. Represses the expression of FTH1 and other antioxidant detoxification genes. Triggers cell proliferation and transformation. This chain is Cyclic AMP-dependent transcription factor ATF-1 (ATF1), found in Homo sapiens (Human).